A 215-amino-acid polypeptide reads, in one-letter code: uncharacterized protein (215 aa).

5 helical membrane-spanning segments follow: residues 1–21 (MTAE…AIGM), 36–56 (VLIG…FADV), 67–87 (SRIA…NILV), 92–112 (IVGL…MVIG), and 118–138 (LGIY…QLTF).

Belongs to the MgtC/SapB family.

The protein resides in the cell inner membrane. This is an uncharacterized protein from Escherichia coli O157:H7.